Consider the following 262-residue polypeptide: ATP synthase subunit a (262 aa).

Transmembrane regions (helical) follow at residues 26-46 (VHID…FVFS), 86-106 (VAPL…IDLI), 130-150 (DISA…FYTI), 204-226 (LIFI…GIPL), and 240-260 (LQAF…YNKA).

This sequence belongs to the ATPase A chain family. In terms of assembly, F-type ATPases have 2 components, CF(1) - the catalytic core - and CF(0) - the membrane proton channel. CF(1) has five subunits: alpha(3), beta(3), gamma(1), delta(1), epsilon(1). CF(0) has three main subunits: a(1), b(2) and c(9-12). The alpha and beta chains form an alternating ring which encloses part of the gamma chain. CF(1) is attached to CF(0) by a central stalk formed by the gamma and epsilon chains, while a peripheral stalk is formed by the delta and b chains.

The protein localises to the cell inner membrane. Functionally, key component of the proton channel; it plays a direct role in the translocation of protons across the membrane. In Haemophilus influenzae (strain 86-028NP), this protein is ATP synthase subunit a.